We begin with the raw amino-acid sequence, 221 residues long: Enolase-phosphatase E1 (221 aa).

It belongs to the HAD-like hydrolase superfamily. MasA/MtnC family. Monomer. It depends on Mg(2+) as a cofactor.

The catalysed reaction is 5-methylsulfanyl-2,3-dioxopentyl phosphate + H2O = 1,2-dihydroxy-5-(methylsulfanyl)pent-1-en-3-one + phosphate. Its pathway is amino-acid biosynthesis; L-methionine biosynthesis via salvage pathway; L-methionine from S-methyl-5-thio-alpha-D-ribose 1-phosphate: step 3/6. The protein operates within amino-acid biosynthesis; L-methionine biosynthesis via salvage pathway; L-methionine from S-methyl-5-thio-alpha-D-ribose 1-phosphate: step 4/6. Functionally, bifunctional enzyme that catalyzes the enolization of 2,3-diketo-5-methylthiopentyl-1-phosphate (DK-MTP-1-P) into the intermediate 2-hydroxy-3-keto-5-methylthiopentenyl-1-phosphate (HK-MTPenyl-1-P), which is then dephosphorylated to form the acireductone 1,2-dihydroxy-3-keto-5-methylthiopentene (DHK-MTPene). The polypeptide is Enolase-phosphatase E1 (Hydrogenobaculum sp. (strain Y04AAS1)).